Reading from the N-terminus, the 231-residue chain is UPF0749 protein YlxW (231 aa).

A signal peptide spans 1-34 (MRGKSAVLLSLIMLIAGFLISFSFQMTKENNKSA). Residues 44-94 (YALRDELLKQEKENKKFEKELYQKQNKVRQAENKLKKEKSEYYNVLEDTEK) adopt a coiled-coil conformation.

It belongs to the UPF0749 family.

Functionally, may be involved in cell division and sporulation. The protein is UPF0749 protein YlxW (ylxW) of Bacillus subtilis (strain 168).